The sequence spans 45 residues: Large ribosomal subunit protein bL34c (45 aa).

This sequence belongs to the bacterial ribosomal protein bL34 family.

Its subcellular location is the plastid. The protein localises to the chloroplast. The protein is Large ribosomal subunit protein bL34c of Emiliania huxleyi (Coccolithophore).